The primary structure comprises 637 residues: Chaperone protein DnaK (637 aa).

Threonine 203 bears the Phosphothreonine; by autocatalysis mark. A disordered region spans residues 600 to 637; the sequence is SAVYGQQQEQGAPAQEEPSAEGKKNDDEGTVEGEFREV. Over residues 604–616 the composition is skewed to low complexity; sequence GQQQEQGAPAQEE. A compositionally biased stretch (basic and acidic residues) spans 619-637; sequence AEGKKNDDEGTVEGEFREV.

Belongs to the heat shock protein 70 family.

Its function is as follows. Acts as a chaperone. This Dehalococcoides mccartyi (strain ATCC BAA-2266 / KCTC 15142 / 195) (Dehalococcoides ethenogenes (strain 195)) protein is Chaperone protein DnaK.